The following is a 445-amino-acid chain: tRNA modification GTPase MnmE (445 aa).

Positions 20, 79, and 119 each coordinate (6S)-5-formyl-5,6,7,8-tetrahydrofolate. The region spanning 215-371 (GLKLAIIGPP…ILKNIEEIAE (157 aa)) is the TrmE-type G domain. A K(+)-binding site is contributed by asparagine 225. Residues 225-230 (NAGKSS), 244-250 (SNIAGTT), and 269-272 (DTAG) contribute to the GTP site. Mg(2+) is bound at residue serine 229. K(+) is bound by residues serine 244, isoleucine 246, and threonine 249. Threonine 250 serves as a coordination point for Mg(2+). Lysine 445 provides a ligand contact to (6S)-5-formyl-5,6,7,8-tetrahydrofolate.

Belongs to the TRAFAC class TrmE-Era-EngA-EngB-Septin-like GTPase superfamily. TrmE GTPase family. As to quaternary structure, homodimer. Heterotetramer of two MnmE and two MnmG subunits. The cofactor is K(+).

It is found in the cytoplasm. Functionally, exhibits a very high intrinsic GTPase hydrolysis rate. Involved in the addition of a carboxymethylaminomethyl (cmnm) group at the wobble position (U34) of certain tRNAs, forming tRNA-cmnm(5)s(2)U34. The sequence is that of tRNA modification GTPase MnmE from Rickettsia bellii (strain RML369-C).